The sequence spans 248 residues: Inner membrane protein pE248R (248 aa).

Gly-2 carries N-myristoyl glycine; by host lipidation. Residues 2-199 (GGSTSKNSFK…ADAISAVFKN (198 aa)) lie on the Cytoplasmic side of the membrane. A helical membrane pass occupies residues 200-220 (IMVAAVVIVLIIVGFIAVFYF). Residues 221 to 248 (LHSRHRHEEEEEAEPLISNKVLKNAAVS) are Extracellular-facing.

The protein belongs to the asfivirus E248R family. As to quaternary structure, interacts with A151R.

The protein resides in the host membrane. The protein localises to the virion membrane. Essential for viral fusion with host endosomal membrane and core release. The sequence is that of Inner membrane protein pE248R from Ornithodoros (relapsing fever ticks).